Reading from the N-terminus, the 159-residue chain is Betainyl-CoA thioesterase (159 aa).

It belongs to the betainyl-CoA thioesterase family.

The catalysed reaction is N,N,N-trimethylglycyl-CoA + H2O = glycine betaine + CoA + H(+). It participates in amine and polyamine metabolism; carnitine metabolism. Its function is as follows. Catalyzes the cleavage of betainyl-CoA (N,N,N-trimethylglycyl-CoA) into glycine betaine and coenzyme A. Is involved in a L-carnitine degradation pathway that allows P.aeruginosa to grow on L-carnitine as the sole source of carbon and nitrogen. The chain is Betainyl-CoA thioesterase from Pseudomonas aeruginosa (strain ATCC 15692 / DSM 22644 / CIP 104116 / JCM 14847 / LMG 12228 / 1C / PRS 101 / PAO1).